Here is an 881-residue protein sequence, read N- to C-terminus: MKYMGLNDIRESYLSFFEKKEHLRLPSFSLIPKNDKSLLLINAGMAPLKPYFTGLQTPPKTRVTTCQKCIRTGDIENIGKTSRHGTFFEMLGNFSFGDYFKEEVISWAWEYITEVLKFPKDRIYITIYLDDDEAFKIWTEKAGVDPSRIFRFGKEDNFWEHGSGPCGPCSEMHFDRREKPDLIKTREKFIELQDKDEVIEFWNLVFTQFDKDEDGNYNKLKNPNIDTGMGLERIATIMQNTDSIFEIDTIREVLDAVCKICNVKYGENHKNDVSLRIITDHIRSVTFMISDGILPSNEGRGYVLRRLLRRAARHGKTLGIEKTFLCGLCDVVIKNSKGAYKELEEKQDYIKNVIEIEEKRFDETLDSGMEILKNYIDELSLENKKVMSGEKAFRLYDTYGFPVELTQEILEEKGIEIDMNDFHSEMEKQKNRARDAREESNYMGKEIKLIDKLPESVTTKFVGYNSTSTDSKVEVLIKDDEFVSTINEGESGIVVTEETPFYAEMGGQIGDKGIIFGKNGEAKVVDCKNNISGKIIHIVQVVKGSIEKNENVTLEVNYKKRKDICKNHTATHMLQAALKKVVGSHINQSGSYVDNERLRFDFTHFTALTDEEILKVEAMVNDEIMAAYDVKTDIMSVDEAKKTGAMALFDEKYGNRVRVVSVGDFSRELCGGTHVNNSGEIGLFKIISESGVAAGIRRIEAITGKEAVRYTEENDNLIRNIEQELKCSKKDILNKINQYHSELKEKEKEINILKGKLASGFEENILSSVKEVSGVKYVASEVKGISGDTLRELCDKVRNKIDDGMVLLASKDGEKVQFVAMASKNAVKKGVHCGKVIKEVASMCGGNGGGRPDMAQAGGKDGEKLETALKEVGNIMEKLVK.

Residues His568, His572, Cys670, and His674 each coordinate Zn(2+).

This sequence belongs to the class-II aminoacyl-tRNA synthetase family. Zn(2+) serves as cofactor.

It localises to the cytoplasm. The enzyme catalyses tRNA(Ala) + L-alanine + ATP = L-alanyl-tRNA(Ala) + AMP + diphosphate. Catalyzes the attachment of alanine to tRNA(Ala) in a two-step reaction: alanine is first activated by ATP to form Ala-AMP and then transferred to the acceptor end of tRNA(Ala). Also edits incorrectly charged Ser-tRNA(Ala) and Gly-tRNA(Ala) via its editing domain. The polypeptide is Alanine--tRNA ligase (Clostridium acetobutylicum (strain ATCC 824 / DSM 792 / JCM 1419 / IAM 19013 / LMG 5710 / NBRC 13948 / NRRL B-527 / VKM B-1787 / 2291 / W)).